A 515-amino-acid polypeptide reads, in one-letter code: Transcription termination factor Rho (515 aa).

Residues 146-221 (DVLFTGVLDV…VKIKSINDQD (76 aa)) enclose the Rho RNA-BD domain. ATP-binding positions include 264–269 (GKGQRA), 276–281 (KAGKTT), and arginine 307.

It belongs to the Rho family. Homohexamer. The homohexamer assembles into an open ring structure.

Functionally, facilitates transcription termination by a mechanism that involves Rho binding to the nascent RNA, activation of Rho's RNA-dependent ATPase activity, and release of the mRNA from the DNA template. In Borreliella burgdorferi (strain ATCC 35210 / DSM 4680 / CIP 102532 / B31) (Borrelia burgdorferi), this protein is Transcription termination factor Rho.